The chain runs to 405 residues: Phosphoglycerate kinase (405 aa).

Residues 24-26, arginine 40, 63-66, arginine 122, and arginine 162 each bind substrate; these read DFN and HLGR. Residues lysine 213, glutamate 332, and 361–364 each bind ATP; that span reads GGDS.

The protein belongs to the phosphoglycerate kinase family. Monomer.

The protein localises to the cytoplasm. The enzyme catalyses (2R)-3-phosphoglycerate + ATP = (2R)-3-phospho-glyceroyl phosphate + ADP. It participates in carbohydrate degradation; glycolysis; pyruvate from D-glyceraldehyde 3-phosphate: step 2/5. This is Phosphoglycerate kinase from Corynebacterium diphtheriae (strain ATCC 700971 / NCTC 13129 / Biotype gravis).